The chain runs to 24 residues: Coenzyme PQQ synthesis protein A (24 aa).

The segment at residues 16 to 20 is a cross-link (pyrroloquinoline quinone (Glu-Tyr)); sequence EITMY.

The protein belongs to the PqqA family.

Its pathway is cofactor biosynthesis; pyrroloquinoline quinone biosynthesis. Required for coenzyme pyrroloquinoline quinone (PQQ) biosynthesis. PQQ is probably formed by cross-linking a specific glutamate to a specific tyrosine residue and excising these residues from the peptide. The sequence is that of Coenzyme PQQ synthesis protein A from Cupriavidus taiwanensis (strain DSM 17343 / BCRC 17206 / CCUG 44338 / CIP 107171 / LMG 19424 / R1) (Ralstonia taiwanensis (strain LMG 19424)).